The following is a 443-amino-acid chain: Methyl-coenzyme M reductase subunit beta (443 aa).

Tyrosine 367 lines the coenzyme M pocket. Position 369 (glycine 369) interacts with coenzyme B.

The protein belongs to the methyl-coenzyme M reductase beta subunit family. MCR is a hexamer of two alpha, two beta, and two gamma chains, forming a dimer of heterotrimers. The cofactor is coenzyme F430.

It is found in the cytoplasm. The enzyme catalyses coenzyme B + methyl-coenzyme M = methane + coenzyme M-coenzyme B heterodisulfide. Its pathway is one-carbon metabolism; methyl-coenzyme M reduction; methane from methyl-coenzyme M: step 1/1. Functionally, component of the methyl-coenzyme M reductase (MCR) I that catalyzes the reductive cleavage of methyl-coenzyme M (CoM-S-CH3 or 2-(methylthio)ethanesulfonate) using coenzyme B (CoB or 7-mercaptoheptanoylthreonine phosphate) as reductant which results in the production of methane and the mixed heterodisulfide of CoB and CoM (CoM-S-S-CoB). This is the final step in methanogenesis. This Methanococcus voltae protein is Methyl-coenzyme M reductase subunit beta (mcrB).